Here is a 94-residue protein sequence, read N- to C-terminus: Co-chaperonin GroES (94 aa).

This sequence belongs to the GroES chaperonin family. In terms of assembly, heptamer of 7 subunits arranged in a ring. Interacts with the chaperonin GroEL.

Its subcellular location is the cytoplasm. Together with the chaperonin GroEL, plays an essential role in assisting protein folding. The GroEL-GroES system forms a nano-cage that allows encapsulation of the non-native substrate proteins and provides a physical environment optimized to promote and accelerate protein folding. GroES binds to the apical surface of the GroEL ring, thereby capping the opening of the GroEL channel. This chain is Co-chaperonin GroES, found in Brevibacillus brevis (strain 47 / JCM 6285 / NBRC 100599).